The following is a 339-amino-acid chain: Anthranilate phosphoribosyltransferase (339 aa).

Residues G81, 84–85 (GD), S89, 91–94 (NVSS), 109–117 (KHGNRALSS), and A121 contribute to the 5-phospho-alpha-D-ribose 1-diphosphate site. G81 provides a ligand contact to anthranilate. S93 contributes to the Mg(2+) binding site. N112 provides a ligand contact to anthranilate. Residue R167 coordinates anthranilate. Residues D225 and E226 each coordinate Mg(2+).

This sequence belongs to the anthranilate phosphoribosyltransferase family. In terms of assembly, homodimer. Mg(2+) serves as cofactor.

It catalyses the reaction N-(5-phospho-beta-D-ribosyl)anthranilate + diphosphate = 5-phospho-alpha-D-ribose 1-diphosphate + anthranilate. It functions in the pathway amino-acid biosynthesis; L-tryptophan biosynthesis; L-tryptophan from chorismate: step 2/5. Catalyzes the transfer of the phosphoribosyl group of 5-phosphorylribose-1-pyrophosphate (PRPP) to anthranilate to yield N-(5'-phosphoribosyl)-anthranilate (PRA). The sequence is that of Anthranilate phosphoribosyltransferase from Brucella suis (strain ATCC 23445 / NCTC 10510).